Reading from the N-terminus, the 374-residue chain is Multicilin (374 aa).

Residues Glu-164 to Leu-212 are a coiled coil. A disordered region spans residues Arg-230–Ser-260. A TIRT domain region spans residues Thr-330–Asn-374.

This sequence belongs to the geminin family. Component of the EDM complex, at least composed of e2f4, e2f5, mcidas and tfdp1. Expressed in multiciliate differentiating cells. Expression is lost by stage 26, when multiciliate cells in the skin are fully differentiated, but is then detected in the developing nephrostomes of the kidneys where multiciliate cells form at later stages.

It is found in the nucleus. Functionally, transcription regulator specifically required for multiciliate cell differentiation. Acts in a multiprotein complex containing E2F4 and E2F5 that binds and activates genes required for centriole biogenesis. Activates genes required for centriole assembly (plk4, cep152) and genes specifically required for motile cilia formation (foxj1). Also promotes the deuterosome pathway of centriole biogenesis by activating expression of ccdc67/deup1, but not its paralog cep63. The sequence is that of Multicilin (mcidas) from Xenopus laevis (African clawed frog).